The primary structure comprises 64 residues: MSLSYLDLLLAFGCVLAVSVIVNCFLVSHNNCVIEITGEAVRISGCTFDRTFVELVKGLKPARH.

At 1-7 (MSLSYLD) the chain is on the lumenal side. Residues 8-28 (LLLAFGCVLAVSVIVNCFLVS) form a helical membrane-spanning segment. Over 29-64 (HNNCVIEITGEAVRISGCTFDRTFVELVKGLKPARH) the chain is Cytoplasmic.

This sequence belongs to the Tymovirales TGBp3 protein family.

Its subcellular location is the host endoplasmic reticulum membrane. Functionally, plays a role in viral cell-to-cell propagation, by facilitating genome transport to neighboring plant cells through plasmosdesmata. May induce the formation of granular vesicles derived from the Endoplasmic reticulum, which align on actin filaments. The protein is Movement protein TGBp3 of Chrysanthemum morifolium (Florist's daisy).